The following is a 550-amino-acid chain: Arginine--tRNA ligase (550 aa).

The short motif at 130 to 140 (ANPTGPIHIGG) is the 'HIGH' region element.

Belongs to the class-I aminoacyl-tRNA synthetase family. Monomer.

It is found in the cytoplasm. The enzyme catalyses tRNA(Arg) + L-arginine + ATP = L-arginyl-tRNA(Arg) + AMP + diphosphate. The protein is Arginine--tRNA ligase of Mycobacterium sp. (strain JLS).